A 672-amino-acid polypeptide reads, in one-letter code: Rho GTPase-activating protein 40 (672 aa).

Residues 43 to 68 form a disordered region; it reads GCSPGLSTGPTNLQQHPQKPRPADCS. Residues 47-59 show a composition bias toward polar residues; that stretch reads GLSTGPTNLQQHP. The region spanning 321–519 is the Rho-GAP domain; it reads VPLHSLLEAD…MMVQYQDLLW (199 aa).

GTPase activator for the Rho-type GTPases by converting them to an inactive GDP-bound state. The sequence is that of Rho GTPase-activating protein 40 from Mus musculus (Mouse).